The chain runs to 224 residues: Claudin-17 (224 aa).

Over 1–7 (MAFYPLQ) the chain is Cytoplasmic. Residues 8–28 (IAGLVLGFFGLVGTIGTTLLP) traverse the membrane as a helical segment. At 29–81 (QWRVSAFIGSNIIIFERIWEGLWMNCIQQAMVTLQCKFYNSILALPPVLEAAR) the chain is on the extracellular side. Residues 82-102 (ALMCVAVALALVALIIGICGM) form a helical membrane-spanning segment. The Cytoplasmic segment spans residues 103 to 124 (KQLQCTGSSERVKAYLLGTSGV). Residues 125–145 (LFILTGIFVLIPVSWTANIII) traverse the membrane as a helical segment. The Extracellular segment spans residues 146–164 (RDFYDPTVHAGQKRELGGA). A helical membrane pass occupies residues 165-185 (LFLGWATAAVLFIGGGLLCGY). Topologically, residues 186–224 (CCCNRKERWHRYPVPAYRVPQKDNQRNVTVPRKSSTSYV) are cytoplasmic.

The protein belongs to the claudin family. In terms of assembly, does not form homotypic polymeric strands and it is not sufficient to form tight junctions by its own. Interacts with OCLN. Expressed at high levels in the kidney and at mucher lower levels in the brain. In the kidney, expression gradually decreases from the proximal tubule downstream to the distal convoluted tubule. Expressed in the thin ascending limb of Henle's loop, as well as in the thick ascending limb of Henle's loop. In the distal convoluted tubules, expressed only in a few tubules. Not detected in the collecting duct. In the brain, expressed in blood vessels (at protein level).

It localises to the cell junction. Its subcellular location is the tight junction. The protein localises to the cell membrane. The catalysed reaction is chloride(in) = chloride(out). It catalyses the reaction hydrogencarbonate(in) = hydrogencarbonate(out). The enzyme catalyses bromide(in) = bromide(out). It carries out the reaction iodide(out) = iodide(in). The catalysed reaction is fluoride(in) = fluoride(out). It catalyses the reaction nitrate(in) = nitrate(out). The enzyme catalyses thiocyanate(in) = thiocyanate(out). Functionally, channel-forming tight junction protein with selectivity for anions, including chloride and hydrogencarbonate, and for solutes smaller than 9 Angstrom in diameter. In the kidney proximal tubule, may be involved in quantitative reabsorption of filtered anions. Does not affect water permeability. The protein is Claudin-17 (Cldn17) of Mus musculus (Mouse).